The sequence spans 446 residues: Glutamine synthetase (446 aa).

One can recognise a GS beta-grasp domain in the interval 18–103 (ENVRYLRLQF…LICDVYKTDG (86 aa)). Residues 110–446 (PRANLKRVLK…WERDQYMKQY (337 aa)) enclose the GS catalytic domain. Residues glutamate 134 and glutamate 136 each coordinate Mg(2+). Glutamate 186 contacts ATP. The Mg(2+) site is built by glutamate 191 and glutamate 198. L-glutamate contacts are provided by residues 242-243 (NG) and glycine 243. Histidine 247 contacts Mg(2+). Serine 251 lines the ATP pocket. L-glutamate-binding residues include arginine 300, glutamate 306, and arginine 318. The ATP site is built by arginine 318 and arginine 323. A Mg(2+)-binding site is contributed by glutamate 335. Arginine 337 provides a ligand contact to L-glutamate.

The protein belongs to the glutamine synthetase family. Oligomer of 12 subunits arranged in the form of two hexagons. In its feedback-inhibited form, interacts with TnrA in order to block its DNA-binding activity. Mg(2+) is required as a cofactor.

The protein localises to the cytoplasm. The catalysed reaction is L-glutamate + NH4(+) + ATP = L-glutamine + ADP + phosphate + H(+). Inhibited by glutamine. Functionally, glutamine synthetase (GS) is an unusual multitasking protein that functions as an enzyme, a transcription coregulator, and a chaperone in ammonium assimilation and in the regulation of genes involved in nitrogen metabolism. It catalyzes the ATP-dependent biosynthesis of glutamine from glutamate and ammonia. Feedback-inhibited GlnA also interacts with and regulates the activity of the transcriptional regulator TnrA. During nitrogen limitation, TnrA is in its DNA-binding active state and turns on the transcription of genes required for nitrogen assimilation. Under conditions of nitrogen excess, feedback-inhibited GlnA forms a stable complex with TnrA, which inhibits its DNA-binding activity. In contrast, feedback-inhibited GlnA acts as a chaperone to stabilize the DNA-binding activity of GlnR, which represses the transcription of nitrogen assimilation genes. The chain is Glutamine synthetase from Staphylococcus aureus (strain N315).